We begin with the raw amino-acid sequence, 254 residues long: Ribonuclease HII (254 aa).

The region spanning 70 to 254 (RYICGIDEVG…ASFIKNLTSC (185 aa)) is the RNase H type-2 domain. The a divalent metal cation site is built by D76, E77, and D168.

It belongs to the RNase HII family. Mn(2+) is required as a cofactor. Mg(2+) serves as cofactor.

It is found in the cytoplasm. It carries out the reaction Endonucleolytic cleavage to 5'-phosphomonoester.. In terms of biological role, endonuclease that specifically degrades the RNA of RNA-DNA hybrids. This Lachnoclostridium phytofermentans (strain ATCC 700394 / DSM 18823 / ISDg) (Clostridium phytofermentans) protein is Ribonuclease HII.